A 258-amino-acid chain; its full sequence is Imidazole glycerol phosphate synthase subunit HisF (258 aa).

Active-site residues include Asp11 and Asp130.

Belongs to the HisA/HisF family. In terms of assembly, heterodimer of HisH and HisF.

Its subcellular location is the cytoplasm. It catalyses the reaction 5-[(5-phospho-1-deoxy-D-ribulos-1-ylimino)methylamino]-1-(5-phospho-beta-D-ribosyl)imidazole-4-carboxamide + L-glutamine = D-erythro-1-(imidazol-4-yl)glycerol 3-phosphate + 5-amino-1-(5-phospho-beta-D-ribosyl)imidazole-4-carboxamide + L-glutamate + H(+). Its pathway is amino-acid biosynthesis; L-histidine biosynthesis; L-histidine from 5-phospho-alpha-D-ribose 1-diphosphate: step 5/9. Its function is as follows. IGPS catalyzes the conversion of PRFAR and glutamine to IGP, AICAR and glutamate. The HisF subunit catalyzes the cyclization activity that produces IGP and AICAR from PRFAR using the ammonia provided by the HisH subunit. In Enterobacter sp. (strain 638), this protein is Imidazole glycerol phosphate synthase subunit HisF.